The primary structure comprises 86 residues: Small ribosomal subunit protein bS16 (86 aa).

This sequence belongs to the bacterial ribosomal protein bS16 family.

The polypeptide is Small ribosomal subunit protein bS16 (Mycoplasmoides gallisepticum (strain R(low / passage 15 / clone 2)) (Mycoplasma gallisepticum)).